The sequence spans 1410 residues: SNF2 domain-containing protein CLASSY 3 (1410 aa).

Residues 1–12 are compositionally biased toward basic residues; it reads MECIGKRVKSRS. Disordered stretches follow at residues 1–74, 87–108, 209–330, 344–376, 428–593, and 632–654; these read MECI…SVPN, DLNVEKKSGPSSSRLTDGSEQN, GEIE…PIKR, RSGSSLTKPRERDNKIQKLNHREEEKKERQREV, NVSK…LKDK, and EDEADELVSSAEDQSQEQAREDH. The Nuclear localization signal 1 signature appears at 22-29; that stretch reads RKKMETVA. Residues 95–108 are compositionally biased toward polar residues; that stretch reads GPSSSRLTDGSEQN. Residues 245–266 are compositionally biased toward acidic residues; that stretch reads SDGEDSSSETDEEEEENQDSED. Residues 248–278 are a coiled coil; sequence EDSSSETDEEEEENQDSEDNNTKDNVTVESL. A compositionally biased stretch (low complexity) spans 276-301; sequence ESLSSEDPSSSSSSSSSSSSSSSSSS. Positions 306-323 are enriched in basic and acidic residues; sequence SYVKEVVGDNRDDDDLRK. The Nuclear localization signal 2 signature appears at 328–335; it reads IKRVSLVE. Basic and acidic residues predominate over residues 351–376; it reads KPRERDNKIQKLNHREEEKKERQREV. Residues 356–377 adopt a coiled-coil conformation; that stretch reads DNKIQKLNHREEEKKERQREVV. The span at 428–446 shows a compositional bias: polar residues; the sequence is NVSKYEDSVSINSGKTTGA. Basic and acidic residues-rich tracts occupy residues 450–463 and 488–504; these read PEVENPETGKELNT and EPSRPEIYSSEKAKEVQ. A compositionally biased stretch (low complexity) spans 576–587; it reads SSISSGDGYESD. One can recognise a Helicase ATP-binding domain in the interval 850–1060; that stretch reads FENSDETGGC…CNVLGLARPK (211 aa). Position 863 to 870 (863 to 870) interacts with ATP; the sequence is HAPGTGKT. Positions 1011-1014 match the DEAH box motif; it reads DEAH. Residues 1132-1139 carry the Nuclear localization signal 3 motif; it reads QRRVLESI. One can recognise a Helicase C-terminal domain in the interval 1206-1359; sequence EFVELCEVIK…ELVFACSSRH (154 aa).

The protein belongs to the SNF2/RAD54 helicase family. As to quaternary structure, interacts with NRPD1.

Its subcellular location is the nucleus. Its function is as follows. Probable chromatin remodeling factor. This Arabidopsis thaliana (Mouse-ear cress) protein is SNF2 domain-containing protein CLASSY 3 (CLSY3).